A 245-amino-acid polypeptide reads, in one-letter code: tRNA pseudouridine synthase A 2 (245 aa).

Residue Asp53 is the Nucleophile of the active site. Tyr111 is a substrate binding site.

Belongs to the tRNA pseudouridine synthase TruA family. In terms of assembly, homodimer.

The catalysed reaction is uridine(38/39/40) in tRNA = pseudouridine(38/39/40) in tRNA. Functionally, formation of pseudouridine at positions 38, 39 and 40 in the anticodon stem and loop of transfer RNAs. This chain is tRNA pseudouridine synthase A 2, found in Bacillus anthracis.